A 437-amino-acid polypeptide reads, in one-letter code: tRNA(Ile)-lysidine synthase (437 aa).

22–27 (SGGLDS) is a binding site for ATP.

Belongs to the tRNA(Ile)-lysidine synthase family.

The protein localises to the cytoplasm. The enzyme catalyses cytidine(34) in tRNA(Ile2) + L-lysine + ATP = lysidine(34) in tRNA(Ile2) + AMP + diphosphate + H(+). In terms of biological role, ligates lysine onto the cytidine present at position 34 of the AUA codon-specific tRNA(Ile) that contains the anticodon CAU, in an ATP-dependent manner. Cytidine is converted to lysidine, thus changing the amino acid specificity of the tRNA from methionine to isoleucine. In Xylella fastidiosa (strain 9a5c), this protein is tRNA(Ile)-lysidine synthase.